A 108-amino-acid chain; its full sequence is Glutaredoxin-1 (108 aa).

Residues 3-106 form the Glutaredoxin domain; it reads EEFVQQRLAN…DILSSIGVLR (104 aa). Cysteine 23 and cysteine 26 are disulfide-bonded.

It belongs to the glutaredoxin family.

The protein resides in the virion. Its function is as follows. Has thioltransferase and dehydroascorbate reductase activities. This is Glutaredoxin-1 (OPG075) from Cowpox virus (strain GRI-90 / Grishak) (CPV).